The sequence spans 393 residues: Formate-dependent phosphoribosylglycinamide formyltransferase (393 aa).

N(1)-(5-phospho-beta-D-ribosyl)glycinamide-binding positions include 22–23 (EL) and glutamate 82. ATP is bound by residues arginine 114, lysine 155, 160–165 (SSGKGQ), 195–198 (EGFI), and glutamate 203. Residues 119–308 (RLAAEELKLP…QFALHARAIL (190 aa)) form the ATP-grasp domain. Residues glutamate 267 and glutamate 279 each contribute to the Mg(2+) site. N(1)-(5-phospho-beta-D-ribosyl)glycinamide contacts are provided by residues aspartate 286, lysine 356, and 363–364 (RR).

This sequence belongs to the PurK/PurT family. In terms of assembly, homodimer.

The enzyme catalyses N(1)-(5-phospho-beta-D-ribosyl)glycinamide + formate + ATP = N(2)-formyl-N(1)-(5-phospho-beta-D-ribosyl)glycinamide + ADP + phosphate + H(+). It functions in the pathway purine metabolism; IMP biosynthesis via de novo pathway; N(2)-formyl-N(1)-(5-phospho-D-ribosyl)glycinamide from N(1)-(5-phospho-D-ribosyl)glycinamide (formate route): step 1/1. In terms of biological role, involved in the de novo purine biosynthesis. Catalyzes the transfer of formate to 5-phospho-ribosyl-glycinamide (GAR), producing 5-phospho-ribosyl-N-formylglycinamide (FGAR). Formate is provided by PurU via hydrolysis of 10-formyl-tetrahydrofolate. The chain is Formate-dependent phosphoribosylglycinamide formyltransferase from Pseudomonas savastanoi pv. phaseolicola (strain 1448A / Race 6) (Pseudomonas syringae pv. phaseolicola (strain 1448A / Race 6)).